The primary structure comprises 691 residues: MTDCSSTLAALLPTADFTASLGNSDDHVDVSSFTTTSESTSPPYSSSEHHSPTDQRTETPTSDSGNASFSPENVATSFESSDRDASPDNLSTSSAHLNDLQEKGVVVDEELQRQLLRFHQDFKESLMENNQNTINMMSAAFNQQLFKQTLANLNTVTPQLPVNIPTGLPMPASPCTTAASAPSVESTPTKRKRQRRNPVWPYFDVIDGTARCKQCLYSTKSVFSTNLKVHLRSHHRPDYEKVIMAEDALNLNALLLSGNTSKLFNVDANRKRMPPMTSSILMTINKLANQQQNGEENPLNAVLRQTIANNGLQQHLQNVQTQLQAAQAAVQKQQQQQQQQQIQQQQQQQQQGAIPQFALNAANLAALNQLARNQMQPTPPPVPQVSQDNIINTLNFPAHIKQEIMNAPHGTDANGVPQPKRRRLRRHPVWVYFKDLEDRMVGCTNCEFRTGSAFSTNLKMHLKAHHKDDYEKVLQLEEEMRLEEGCFGPGNKFKTELIDYIRGGGNVTTPPTPNSSSFPSTPKTPQLVQQIISQSFARSQSPNVIQNGEIKIKKECEDDMFSGLSSTDKLAALVGIAGQEVKKEEAMPANFEEFRQRLLANSSLSSFLGQSTAQPIAVDLNGSVIASETKSPCSSNEDDRKQERDKALARLWADNETLLTNTHFREFVHCLAPEYEIPDVDILATSLVDQY.

2 disordered regions span residues 18-97 (TASL…SAHL) and 171-195 (PASPCTTAASAPSVESTPTKRKRQR). Over residues 31 to 46 (SSFTTTSESTSPPYSS) the composition is skewed to low complexity. Residues 47 to 57 (SEHHSPTDQRT) show a composition bias toward basic and acidic residues. The segment covering 58–79 (ETPTSDSGNASFSPENVATSFE) has biased composition (polar residues). The segment covering 171-183 (PASPCTTAASAPS) has biased composition (low complexity). 2 BED-type zinc fingers span residues 194–242 (QRRN…YEKV) and 424–473 (LRRH…YEKV). Zn(2+) contacts are provided by Cys212, Cys215, His230, His235, Cys443, Cys446, His461, and His466.

In terms of assembly, interacts with gex-3.

The protein is Gex-3-interacting protein 13 (gei-13) of Caenorhabditis elegans.